A 513-amino-acid polypeptide reads, in one-letter code: Maturase K (513 aa).

It belongs to the intron maturase 2 family. MatK subfamily.

The protein resides in the plastid. The protein localises to the chloroplast. In terms of biological role, usually encoded in the trnK tRNA gene intron. Probably assists in splicing its own and other chloroplast group II introns. The sequence is that of Maturase K from Phragmites australis (Common reed).